Here is a 594-residue protein sequence, read N- to C-terminus: Putative 3,4-dihydroxy-2-butanone kinase (594 aa).

A DhaK domain is found at 11–341; sequence DPNDVVTEFI…LDAPTKAPNW (331 aa). Substrate is bound by residues 62 to 65, K113, and D118; that span reads GSGH. H226 (tele-hemiaminal-histidine intermediate) is an active-site residue. Residues 339–358 are disordered; the sequence is PNWPVGAEGNRPPAKIPVPL. Residues 381-585 form the DhaL domain; it reads HILETAIEAA…AAAWYRAAAL (205 aa). Residues 410-413, 455-456, G499, 507-508, and 570-572 contribute to the ATP site; these read DGDC, TS, TL, and DPG.

The protein belongs to the dihydroxyacetone kinase (DAK) family.

The polypeptide is Putative 3,4-dihydroxy-2-butanone kinase (DHBK) (Solanum lycopersicum (Tomato)).